An 880-amino-acid chain; its full sequence is Alanine--tRNA ligase (880 aa).

Residues His568, His572, Cys670, and His674 each contribute to the Zn(2+) site.

Belongs to the class-II aminoacyl-tRNA synthetase family. Requires Zn(2+) as cofactor.

It is found in the cytoplasm. The catalysed reaction is tRNA(Ala) + L-alanine + ATP = L-alanyl-tRNA(Ala) + AMP + diphosphate. Catalyzes the attachment of alanine to tRNA(Ala) in a two-step reaction: alanine is first activated by ATP to form Ala-AMP and then transferred to the acceptor end of tRNA(Ala). Also edits incorrectly charged Ser-tRNA(Ala) and Gly-tRNA(Ala) via its editing domain. In Ligilactobacillus salivarius (strain UCC118) (Lactobacillus salivarius), this protein is Alanine--tRNA ligase.